A 475-amino-acid chain; its full sequence is Ribulose bisphosphate carboxylase large chain (475 aa).

Residues 1-2 (MS) constitute a propeptide that is removed on maturation. At Pro-3 the chain carries N-acetylproline. Lys-14 is modified (N6,N6,N6-trimethyllysine). The substrate site is built by Asn-123 and Thr-173. Catalysis depends on Lys-175, which acts as the Proton acceptor. Lys-177 contributes to the substrate binding site. 3 residues coordinate Mg(2+): Lys-201, Asp-203, and Glu-204. The residue at position 201 (Lys-201) is an N6-carboxylysine. Catalysis depends on His-294, which acts as the Proton acceptor. Substrate contacts are provided by Arg-295, His-327, and Ser-379.

The protein belongs to the RuBisCO large chain family. Type I subfamily. Heterohexadecamer of 8 large chains and 8 small chains; disulfide-linked. The disulfide link is formed within the large subunit homodimers. It depends on Mg(2+) as a cofactor. In terms of processing, the disulfide bond which can form in the large chain dimeric partners within the hexadecamer appears to be associated with oxidative stress and protein turnover.

It is found in the plastid. The protein resides in the chloroplast. It catalyses the reaction 2 (2R)-3-phosphoglycerate + 2 H(+) = D-ribulose 1,5-bisphosphate + CO2 + H2O. It carries out the reaction D-ribulose 1,5-bisphosphate + O2 = 2-phosphoglycolate + (2R)-3-phosphoglycerate + 2 H(+). RuBisCO catalyzes two reactions: the carboxylation of D-ribulose 1,5-bisphosphate, the primary event in carbon dioxide fixation, as well as the oxidative fragmentation of the pentose substrate in the photorespiration process. Both reactions occur simultaneously and in competition at the same active site. The chain is Ribulose bisphosphate carboxylase large chain from Pseudolarix amabilis (Golden larch).